A 364-amino-acid chain; its full sequence is Geranylgeranyl pyrophosphate synthase janG (364 aa).

3 residues coordinate isopentenyl diphosphate: Lys-83, Arg-86, and His-115. Mg(2+) is bound by residues Asp-122 and Asp-126. Residue Arg-131 coordinates dimethylallyl diphosphate. Isopentenyl diphosphate is bound at residue Arg-132. Dimethylallyl diphosphate contacts are provided by Lys-209, Thr-210, and Gln-243. Asp-246 serves as a coordination point for Mg(2+). 3 residues coordinate dimethylallyl diphosphate: Asn-250, Lys-260, and Lys-270.

This sequence belongs to the FPP/GGPP synthase family. The cofactor is Mg(2+).

The catalysed reaction is isopentenyl diphosphate + dimethylallyl diphosphate = (2E)-geranyl diphosphate + diphosphate. The enzyme catalyses isopentenyl diphosphate + (2E)-geranyl diphosphate = (2E,6E)-farnesyl diphosphate + diphosphate. It carries out the reaction isopentenyl diphosphate + (2E,6E)-farnesyl diphosphate = (2E,6E,10E)-geranylgeranyl diphosphate + diphosphate. Its pathway is secondary metabolite biosynthesis. In terms of biological role, geranylgeranyl pyrophosphate synthase; part of the gene cluster that mediates the biosynthesis of the indole diterpenes janthitremanes such as shearinine K or shearinine A. The geranylgeranyl diphosphate (GGPP) synthase janG catalyzes the first step in janthitremane biosynthesis via conversion of farnesyl pyrophosphate and isopentyl pyrophosphate into geranylgeranyl pyrophosphate (GGPP). Condensation of indole-3-glycerol phosphate with GGPP by the prenyl transferase janC then forms 3-geranylgeranylindole (3-GGI). Epoxidation by the FAD-dependent monooxygenase janM leads to a epoxidized-GGI that is substrate of the terpene cyclase janB for cyclization to yield paspaline. Paspaline is subsequently converted to 13-desoxypaspaline by the cytochrome P450 monooxygenase janP, via beta-PC-M6 in a series of alpha-face oxidations. The cytochrome P450 monooxygenase janQ is proposed to carry out sequential beta-face oxidation steps at C-7 and C-13 of 13-desoxypaspaline to form paspalicine and paspalinine respectively. The indole diterpene prenyltransferase janD may then convert paspalinine into shearinine K which is substrate of janO and/or additional enzymes for oxidation and cyclization to generate shearinine A. The sequence is that of Geranylgeranyl pyrophosphate synthase janG from Penicillium janthinellum (Penicillium vitale).